The chain runs to 483 residues: tRNA-2-methylthio-N(6)-dimethylallyladenosine synthase (483 aa).

The region spanning 31–148 (KKLYIETQGC…LPQMLDQHHA (118 aa)) is the MTTase N-terminal domain. C40, C77, C111, C192, C196, and C199 together coordinate [4Fe-4S] cluster. Residues 178–410 (RVEGFKAFVS…QQVIKQSSIE (233 aa)) form the Radical SAM core domain. Residues 413–477 (DAMLGKIERV…LNLVYGELLN (65 aa)) form the TRAM domain.

The protein belongs to the methylthiotransferase family. MiaB subfamily. Monomer. Requires [4Fe-4S] cluster as cofactor.

Its subcellular location is the cytoplasm. It catalyses the reaction N(6)-dimethylallyladenosine(37) in tRNA + (sulfur carrier)-SH + AH2 + 2 S-adenosyl-L-methionine = 2-methylsulfanyl-N(6)-dimethylallyladenosine(37) in tRNA + (sulfur carrier)-H + 5'-deoxyadenosine + L-methionine + A + S-adenosyl-L-homocysteine + 2 H(+). In terms of biological role, catalyzes the methylthiolation of N6-(dimethylallyl)adenosine (i(6)A), leading to the formation of 2-methylthio-N6-(dimethylallyl)adenosine (ms(2)i(6)A) at position 37 in tRNAs that read codons beginning with uridine. The sequence is that of tRNA-2-methylthio-N(6)-dimethylallyladenosine synthase from Acinetobacter baumannii (strain AB0057).